We begin with the raw amino-acid sequence, 48 residues long: Large ribosomal subunit protein bL34 (48 aa).

Belongs to the bacterial ribosomal protein bL34 family.

The sequence is that of Large ribosomal subunit protein bL34 (rpmH) from Mycoplasma pneumoniae (strain ATCC 29342 / M129 / Subtype 1) (Mycoplasmoides pneumoniae).